A 329-amino-acid chain; its full sequence is Phospho-N-acetylmuramoyl-pentapeptide-transferase (329 aa).

Transmembrane regions (helical) follow at residues 1-21 (MLLN…IGIP), 53-73 (MGGF…ALVF), 76-96 (FSPA…IGFL), 109-129 (GLTA…SYFI), 141-161 (ILSW…IWLV), 175-195 (GLAS…AVVH), 198-218 (YDVL…FVFN), 237-257 (FLAI…IGAV), and 309-329 (IVFW…YFAF).

The protein belongs to the glycosyltransferase 4 family. MraY subfamily. Mg(2+) is required as a cofactor.

It is found in the cell membrane. It carries out the reaction UDP-N-acetyl-alpha-D-muramoyl-L-alanyl-gamma-D-glutamyl-L-lysyl-D-alanyl-D-alanine + di-trans,octa-cis-undecaprenyl phosphate = Mur2Ac(oyl-L-Ala-gamma-D-Glu-L-Lys-D-Ala-D-Ala)-di-trans,octa-cis-undecaprenyl diphosphate + UMP. It functions in the pathway cell wall biogenesis; peptidoglycan biosynthesis. Catalyzes the initial step of the lipid cycle reactions in the biosynthesis of the cell wall peptidoglycan: transfers peptidoglycan precursor phospho-MurNAc-pentapeptide from UDP-MurNAc-pentapeptide onto the lipid carrier undecaprenyl phosphate, yielding undecaprenyl-pyrophosphoryl-MurNAc-pentapeptide, known as lipid I. The sequence is that of Phospho-N-acetylmuramoyl-pentapeptide-transferase from Lactococcus lactis subsp. cremoris (strain MG1363).